The primary structure comprises 354 residues: Phospho-N-acetylmuramoyl-pentapeptide-transferase (354 aa).

10 helical membrane-spanning segments follow: residues 27 to 47 (ATLL…INML), 73 to 93 (TMGG…WMDV), 97 to 117 (LVWA…LDDY), 138 to 158 (FVVA…YVPV), 162 to 182 (LYVP…VGAG), 193 to 213 (GLAI…AYLA), 230 to 250 (AGEL…FLWF), 256 to 276 (AVFM…VIAV), 282 to 302 (IVLA…IVQV), and 331 to 351 (TVVI…LATL).

It belongs to the glycosyltransferase 4 family. MraY subfamily. The cofactor is Mg(2+).

The protein localises to the cell inner membrane. It catalyses the reaction UDP-N-acetyl-alpha-D-muramoyl-L-alanyl-gamma-D-glutamyl-meso-2,6-diaminopimeloyl-D-alanyl-D-alanine + di-trans,octa-cis-undecaprenyl phosphate = di-trans,octa-cis-undecaprenyl diphospho-N-acetyl-alpha-D-muramoyl-L-alanyl-D-glutamyl-meso-2,6-diaminopimeloyl-D-alanyl-D-alanine + UMP. It functions in the pathway cell wall biogenesis; peptidoglycan biosynthesis. Its function is as follows. Catalyzes the initial step of the lipid cycle reactions in the biosynthesis of the cell wall peptidoglycan: transfers peptidoglycan precursor phospho-MurNAc-pentapeptide from UDP-MurNAc-pentapeptide onto the lipid carrier undecaprenyl phosphate, yielding undecaprenyl-pyrophosphoryl-MurNAc-pentapeptide, known as lipid I. This chain is Phospho-N-acetylmuramoyl-pentapeptide-transferase, found in Novosphingobium aromaticivorans (strain ATCC 700278 / DSM 12444 / CCUG 56034 / CIP 105152 / NBRC 16084 / F199).